A 378-amino-acid chain; its full sequence is Chaperone protein DnaJ (378 aa).

In terms of domain architecture, J spans 3–67 (DFYDTLGVNR…EKRARYDQFG (65 aa)). The segment at 132 to 214 (GQEREIKIPH…CGGQGVKQVR (83 aa)) adopts a CR-type zinc-finger fold. Residues Cys145, Cys148, Cys162, Cys165, Cys188, Cys191, Cys202, and Cys205 each contribute to the Zn(2+) site. CXXCXGXG motif repeat units follow at residues 145 to 152 (CDVCRGTG), 162 to 169 (CSTCGGAG), 188 to 195 (CPTCSGSG), and 202 to 209 (CQSCGGQG).

It belongs to the DnaJ family. As to quaternary structure, homodimer. Zn(2+) serves as cofactor.

It is found in the cytoplasm. In terms of biological role, participates actively in the response to hyperosmotic and heat shock by preventing the aggregation of stress-denatured proteins and by disaggregating proteins, also in an autonomous, DnaK-independent fashion. Unfolded proteins bind initially to DnaJ; upon interaction with the DnaJ-bound protein, DnaK hydrolyzes its bound ATP, resulting in the formation of a stable complex. GrpE releases ADP from DnaK; ATP binding to DnaK triggers the release of the substrate protein, thus completing the reaction cycle. Several rounds of ATP-dependent interactions between DnaJ, DnaK and GrpE are required for fully efficient folding. Also involved, together with DnaK and GrpE, in the DNA replication of plasmids through activation of initiation proteins. In Prochlorococcus marinus (strain SARG / CCMP1375 / SS120), this protein is Chaperone protein DnaJ.